Reading from the N-terminus, the 311-residue chain is Methionyl-tRNA formyltransferase (311 aa).

Residues arginine 33 to leucine 52 form a disordered region. Serine 110–proline 113 contributes to the (6S)-5,6,7,8-tetrahydrofolate binding site.

It belongs to the Fmt family.

It carries out the reaction L-methionyl-tRNA(fMet) + (6R)-10-formyltetrahydrofolate = N-formyl-L-methionyl-tRNA(fMet) + (6S)-5,6,7,8-tetrahydrofolate + H(+). Functionally, attaches a formyl group to the free amino group of methionyl-tRNA(fMet). The formyl group appears to play a dual role in the initiator identity of N-formylmethionyl-tRNA by promoting its recognition by IF2 and preventing the misappropriation of this tRNA by the elongation apparatus. The sequence is that of Methionyl-tRNA formyltransferase from Parafrankia sp. (strain EAN1pec).